A 229-amino-acid chain; its full sequence is UPF0441 protein YE3666 (229 aa).

Disordered stretches follow at residues 101–125 and 190–229; these read PAQAGMVPTSSSSSETTAAAPQQSG and KPAVTNTITRGGFGESVAKQSSMQRSAATSSKTSTRSMGG. Composition is skewed to low complexity over residues 109–120 and 214–229; these read TSSSSSETTAAA and RSAATSSKTSTRSMGG.

This sequence belongs to the UPF0441 family.

This Yersinia enterocolitica serotype O:8 / biotype 1B (strain NCTC 13174 / 8081) protein is UPF0441 protein YE3666.